We begin with the raw amino-acid sequence, 188 residues long: Photosystem I assembly protein Ycf4 (188 aa).

The next 2 membrane-spanning stretches (helical) occupy residues 26-48 and 68-90; these read MLWA…SSYF and AALT…VFFL.

The protein belongs to the Ycf4 family.

It localises to the cellular thylakoid membrane. Seems to be required for the assembly of the photosystem I complex. In Picosynechococcus sp. (strain ATCC 27264 / PCC 7002 / PR-6) (Agmenellum quadruplicatum), this protein is Photosystem I assembly protein Ycf4.